The sequence spans 907 residues: NADH-quinone oxidoreductase subunit G (907 aa).

In terms of domain architecture, 2Fe-2S ferredoxin-type spans 1–83 (MTIIFVDNEE…GMIVSTSDKI (83 aa)). Positions 34, 45, 48, and 67 each coordinate [2Fe-2S] cluster. Residues 83-122 (ISRNFRKGIIELLMLNHPHDCPICEEGGSCHLQDMTVMAG) enclose the 4Fe-4S His(Cys)3-ligated-type domain. [4Fe-4S] cluster contacts are provided by histidine 99, cysteine 103, cysteine 106, cysteine 112, cysteine 151, cysteine 154, cysteine 157, cysteine 201, cysteine 228, cysteine 231, cysteine 235, and cysteine 263. A 4Fe-4S Mo/W bis-MGD-type domain is found at 221–277 (MQYAPSICQHCCVGCNISVGEKYGKISRIENRYHNAINHYFLCDLGRFSYDYSNVDE).

It belongs to the complex I 75 kDa subunit family. Composed of 13 different subunits. Subunits NuoCD, E, F, and G constitute the peripheral sector of the complex. [2Fe-2S] cluster is required as a cofactor. The cofactor is [4Fe-4S] cluster.

It catalyses the reaction a quinone + NADH + 5 H(+)(in) = a quinol + NAD(+) + 4 H(+)(out). NDH-1 shuttles electrons from NADH, via FMN and iron-sulfur (Fe-S) centers, to quinones in the respiratory chain. Couples the redox reaction to proton translocation (for every two electrons transferred, four hydrogen ions are translocated across the cytoplasmic membrane), and thus conserves the redox energy in a proton gradient. In Buchnera aphidicola subsp. Baizongia pistaciae (strain Bp), this protein is NADH-quinone oxidoreductase subunit G (nuoG).